Reading from the N-terminus, the 671-residue chain is Pescadillo homolog (671 aa).

2 coiled-coil regions span residues 294 to 323 and 548 to 584; these read NQAQAKAVKEAESKRSLMEEELHKVRELFR and QALRKAQEKSRQTETSEARLQRKMSEVKRQEAATRKM. Positions 317–403 constitute a BRCT domain; it reads KVRELFRGLT…LVLPVTGYRI (87 aa). Disordered regions lie at residues 552-577 and 634-671; these read KAQEKSRQTETSEARLQRKMSEVKRQ and GLVNKRLEARRQRAEAKGKKLKERKAGNPYKKLPKWVQ. The span at 634 to 651 shows a compositional bias: basic and acidic residues; it reads GLVNKRLEARRQRAEAKG.

It belongs to the pescadillo family.

It is found in the nucleus. The protein localises to the nucleolus. Its subcellular location is the nucleoplasm. In terms of biological role, required for maturation of ribosomal RNAs and formation of the large ribosomal subunit. This is Pescadillo homolog from Leishmania major.